Consider the following 804-residue polypeptide: Phenylalanine--tRNA ligase beta subunit (804 aa).

The tRNA-binding domain maps to 38–148 (RSSLKGFVIA…EDAPIGGLFA (111 aa)). The region spanning 401–476 (PEIKQIAFPF…RIYGLDKIEP (76 aa)) is the B5 domain. D454, D460, E463, and E464 together coordinate Mg(2+). Positions 710–803 (SPFQMVRRDF…VTKATGAYLR (94 aa)) constitute an FDX-ACB domain.

This sequence belongs to the phenylalanyl-tRNA synthetase beta subunit family. Type 1 subfamily. Tetramer of two alpha and two beta subunits. The cofactor is Mg(2+).

The protein resides in the cytoplasm. It carries out the reaction tRNA(Phe) + L-phenylalanine + ATP = L-phenylalanyl-tRNA(Phe) + AMP + diphosphate + H(+). The chain is Phenylalanine--tRNA ligase beta subunit from Bartonella quintana (strain Toulouse) (Rochalimaea quintana).